The primary structure comprises 148 residues: Endoribonuclease YbeY (148 aa).

The Zn(2+) site is built by His113, His117, and His123.

The protein belongs to the endoribonuclease YbeY family. Zn(2+) serves as cofactor.

The protein resides in the cytoplasm. In terms of biological role, single strand-specific metallo-endoribonuclease involved in late-stage 70S ribosome quality control and in maturation of the 3' terminus of the 16S rRNA. This chain is Endoribonuclease YbeY, found in Borrelia turicatae (strain 91E135).